Consider the following 317-residue polypeptide: ADIPOR-like receptor IZH2 (317 aa).

Residues 1–78 are Cytoplasmic-facing; sequence MSTLLERTKS…TFKSLFYLHN (78 aa). The chain crosses the membrane as a helical span at residues 79–99; sequence ESVNIYSHLIPALGFFTVLLL. The Extracellular segment spans residues 100-110; sequence DKSTIKVFATT. The chain crosses the membrane as a helical span at residues 111 to 131; sequence TWLDHMVIDLFYSGAFACLIL. Topologically, residues 132-153 are cytoplasmic; that stretch reads SSSFHCLKSHSLRIATLGNKLD. The chain crosses the membrane as a helical span at residues 154-174; sequence YLGICILIVTSMVSILYYGYF. Residues 175–176 are Extracellular-facing; the sequence is EK. A helical transmembrane segment spans residues 177-197; it reads FSLFCLFALITVSFGIACSIV. Topologically, residues 198 to 212 are cytoplasmic; that stretch reads SLKDKFRKREWRPYR. The chain crosses the membrane as a helical span at residues 213-233; that stretch reads AGLFVCFGLSSIIPIFSGLYC. Topologically, residues 234–242 are extracellular; the sequence is YSFSEIWTQ. A helical transmembrane segment spans residues 243-263; that stretch reads IQLFWVLLGGVLYIIGAVLYG. At 264–276 the chain is on the cytoplasmic side; sequence MRFPEKICPGKFD. Residues 277-297 traverse the membrane as a helical segment; sequence IWGHSHQLFHFLVVIAALCHL. The Extracellular segment spans residues 298–317; the sequence is RGLLNSYELVHIKMENGIVS.

Belongs to the ADIPOR family.

The protein resides in the membrane. Functionally, probable receptor, which is involved in metabolic pathways that regulate lipid metabolism such as fatty acid oxidation. The polypeptide is ADIPOR-like receptor IZH2 (IZH2) (Saccharomyces cerevisiae (strain ATCC 204508 / S288c) (Baker's yeast)).